Reading from the N-terminus, the 422-residue chain is O-mycaminosyltylonolide 6-deoxyallosyltransferase (422 aa).

This sequence belongs to the glycosyltransferase 28 family.

It carries out the reaction 5-O-beta-D-mycaminosyltylonolide + dTDP-6-deoxy-alpha-D-allose = demethyllactenocin + dTDP + H(+). Functionally, involved in the biosynthesis of the macrolide antibiotic tylosin derived from the polyketide lactone tylactone. Catalyzes the transfer of 6-deoxy-alpha-D-allose from dTDP-6-deoxy-alpha-D-allose to O-mycaminosyltylonolide (OMT) to yield demethyllactenocin. The polypeptide is O-mycaminosyltylonolide 6-deoxyallosyltransferase (Streptomyces fradiae (Streptomyces roseoflavus)).